A 272-amino-acid chain; its full sequence is Large ribosomal subunit protein uL2 (272 aa).

The tract at residues 222–272 (GTAMNPVDHPHGGGEGRNFGKHPVSPWGKKTKGKKTRNNRLTDKFIVHRRS) is disordered. Positions 250–259 (KKTKGKKTRN) are enriched in basic residues. Residues 261-272 (RLTDKFIVHRRS) are compositionally biased toward basic and acidic residues.

It belongs to the universal ribosomal protein uL2 family. As to quaternary structure, part of the 50S ribosomal subunit. Forms a bridge to the 30S subunit in the 70S ribosome.

In terms of biological role, one of the primary rRNA binding proteins. Required for association of the 30S and 50S subunits to form the 70S ribosome, for tRNA binding and peptide bond formation. It has been suggested to have peptidyltransferase activity; this is somewhat controversial. Makes several contacts with the 16S rRNA in the 70S ribosome. The chain is Large ribosomal subunit protein uL2 from Baumannia cicadellinicola subsp. Homalodisca coagulata.